The primary structure comprises 390 residues: 1-deoxy-D-xylulose 5-phosphate reductoisomerase (390 aa).

Positions 10, 11, 12, 13, 36, 37, 38, and 122 each coordinate NADPH. 1-deoxy-D-xylulose 5-phosphate is bound at residue Lys-123. Glu-124 provides a ligand contact to NADPH. Asp-148 contacts Mn(2+). Positions 149, 150, 174, and 197 each coordinate 1-deoxy-D-xylulose 5-phosphate. Glu-150 is a Mn(2+) binding site. An NADPH-binding site is contributed by Gly-203. 1-deoxy-D-xylulose 5-phosphate is bound by residues Ser-210, Asn-215, Lys-216, and Glu-219. Residue Glu-219 coordinates Mn(2+).

It belongs to the DXR family. Requires Mg(2+) as cofactor. Mn(2+) serves as cofactor.

It carries out the reaction 2-C-methyl-D-erythritol 4-phosphate + NADP(+) = 1-deoxy-D-xylulose 5-phosphate + NADPH + H(+). The protein operates within isoprenoid biosynthesis; isopentenyl diphosphate biosynthesis via DXP pathway; isopentenyl diphosphate from 1-deoxy-D-xylulose 5-phosphate: step 1/6. Functionally, catalyzes the NADPH-dependent rearrangement and reduction of 1-deoxy-D-xylulose-5-phosphate (DXP) to 2-C-methyl-D-erythritol 4-phosphate (MEP). In Trichlorobacter lovleyi (strain ATCC BAA-1151 / DSM 17278 / SZ) (Geobacter lovleyi), this protein is 1-deoxy-D-xylulose 5-phosphate reductoisomerase.